A 233-amino-acid polypeptide reads, in one-letter code: 7-cyano-7-deazaguanine synthase (233 aa).

11 to 21 serves as a coordination point for ATP; the sequence is FSGGQDSTTCL. Residues Cys-199, Cys-214, Cys-217, and Cys-220 each contribute to the Zn(2+) site.

Belongs to the QueC family. Zn(2+) serves as cofactor.

It carries out the reaction 7-carboxy-7-deazaguanine + NH4(+) + ATP = 7-cyano-7-deazaguanine + ADP + phosphate + H2O + H(+). It functions in the pathway purine metabolism; 7-cyano-7-deazaguanine biosynthesis. Its function is as follows. Catalyzes the ATP-dependent conversion of 7-carboxy-7-deazaguanine (CDG) to 7-cyano-7-deazaguanine (preQ(0)). This chain is 7-cyano-7-deazaguanine synthase, found in Herminiimonas arsenicoxydans.